Consider the following 184-residue polypeptide: Large ribosomal subunit protein uL22 (184 aa).

The segment at 160–184 is disordered; it reads PEEEVAQKKKISQKKLKKQKLMARE. Residues 167-184 show a composition bias toward basic residues; it reads KKKISQKKLKKQKLMARE.

Belongs to the universal ribosomal protein uL22 family. As to quaternary structure, component of the large ribosomal subunit. In terms of tissue distribution, expressed in pancreas, lung, colon, cystic duct, gall bladder, kidney and liver. Expressed at high levels in the well differentiated pancreatic tumor cell lines HPAF, COLO 357 and Capan-1, the moderately differentiated pancreatic tumor cell lines T3M-4, AsPc-1 and BxPc-3, the poorly differentiated pancreatic tumor cell line MIA PaCa-2, and the pancreatic tumor cell lines of undefined differentiation status such as SW979. Expressed at lower levels in the poorly differentiated pancreatic tumor cell lines HCG-25 and PANC-1.

It is found in the cytoplasm. Its function is as follows. Component of the large ribosomal subunit. The ribosome is a large ribonucleoprotein complex responsible for the synthesis of proteins in the cell. This is Large ribosomal subunit protein uL22 (RPL17) from Homo sapiens (Human).